A 197-amino-acid polypeptide reads, in one-letter code: ATP synthase protein MI25 (197 aa).

A helical membrane pass occupies residues 30–50 (ISIYNEEMIVARCFIGFLIFS).

This sequence belongs to the ATPase protein MI25 family. In terms of assembly, F-type ATPases have 2 components, CF(1) - the catalytic core - and CF(0) - the membrane proton channel. CF(1) has five subunits: alpha(3), beta(3), gamma(1), delta(1), epsilon(1). CF(0) has three main subunits: a, b and c.

It is found in the mitochondrion membrane. Its function is as follows. This is one of the chains of the nonenzymatic component (CF(0) subunit) of the mitochondrial ATPase complex. The chain is ATP synthase protein MI25 from Oryza sativa subsp. indica (Rice).